Consider the following 450-residue polypeptide: Neutral protease 2 homolog AFUB_070680 (450 aa).

The N-terminal stretch at 1-19 (MKITALASAILAVAQGALA) is a signal peptide. The propeptide occupies 20–172 (LPARAPALDI…PASIKPLDRR (153 aa)). Cystine bridges form between Cys-179/Cys-251 and Cys-258/Cys-276. Residue His-300 coordinates Zn(2+). The active site involves Glu-301. Residues His-304 and Asp-315 each coordinate Zn(2+). Positions 364-392 (QPGQTEPGTQTMWDGYSQPGQTEPGTQTM) are enriched in polar residues. The interval 364 to 416 (QPGQTEPGTQTMWDGYSQPGQTEPGTQTMWDGYSQPGQTEPGTQTTWDGYSQP) is disordered. The segment covering 398 to 409 (QPGQTEPGTQTT) has biased composition (low complexity).

Belongs to the peptidase M35 family. The cofactor is Zn(2+).

It is found in the secreted. The enzyme catalyses Preferential cleavage of bonds with hydrophobic residues in P1'. Also 3-Asn-|-Gln-4 and 8-Gly-|-Ser-9 bonds in insulin B chain.. Functionally, secreted metalloproteinase that allows assimilation of proteinaceous substrates. Shows high activities on basic nuclear substrates such as histone and protamine. May be involved in virulence. In Aspergillus fumigatus (strain ATCC MYA-4609 / CBS 101355 / FGSC A1100 / Af293) (Neosartorya fumigata), this protein is Neutral protease 2 homolog AFUB_070680.